A 637-amino-acid chain; its full sequence is Chaperone protein HtpG (637 aa).

Positions 1–338 (MMELKMHNVK…SPDLPLNISR (338 aa)) are a; substrate-binding. A b region spans residues 339-558 (ETLQNNRVVE…EGAMDLRMER (220 aa)). The segment at 493-512 (KFSPEEKDKENKSDEERAEG) is disordered. The tract at residues 559–637 (FLREQNQLNY…LNNLLGKVII (79 aa)) is c.

Belongs to the heat shock protein 90 family. As to quaternary structure, homodimer.

Its subcellular location is the cytoplasm. Its function is as follows. Molecular chaperone. Has ATPase activity. The protein is Chaperone protein HtpG of Wolbachia sp. subsp. Brugia malayi (strain TRS).